The following is a 369-amino-acid chain: Chromatin modification-related protein EAF3 (369 aa).

A Tudor-knot domain is found at 9–97 (TVYAYHGPLI…WDEWVGIDRI (89 aa)). Disordered stretches follow at residues 43 to 66 (PLEE…IAKF) and 126 to 191 (IIVN…NKSK). Basic residues predominate over residues 53 to 62 (NHHHHHHSQH). The span at 126-135 (IIVNATTKNH) shows a compositional bias: low complexity. Over residues 136–149 (TNNKNKKESNKRKS) the composition is skewed to basic residues. Over residues 150-191 (SSATTTSGVTAGTNNNKKQKSASTSTTNNTSGNSGTTSNKSK) the composition is skewed to low complexity. One can recognise an MRG domain in the interval 193 to 368 (ILSRLNLNFP…TSPQYDSLAR (176 aa)).

This sequence belongs to the MRG family. As to quaternary structure, component of the NuA4 histone acetyltransferase complex.

It localises to the nucleus. Functionally, involved in deacetylation of histones, chromatin assembly and chromosome segregation. May act as a transcriptional oscillator, directing histone deacetylases to specific chromosomal domains. Component of the NuA4 histone acetyltransferase complex which is involved in transcriptional activation of selected genes principally by acetylation of nucleosomal histone H4 and H2A. The NuA4 complex is also involved in DNA repair. The polypeptide is Chromatin modification-related protein EAF3 (EAF3) (Candida albicans (strain SC5314 / ATCC MYA-2876) (Yeast)).